We begin with the raw amino-acid sequence, 174 residues long: Alkyl hydroperoxide reductase AhpD (174 aa).

C130 (proton donor) is an active-site residue. A disulfide bridge connects residues C130 and C133. C133 acts as the Cysteine sulfenic acid (-SOH) intermediate in catalysis.

This sequence belongs to the AhpD family. Homotrimer.

It catalyses the reaction N(6)-[(R)-dihydrolipoyl]-L-lysyl-[lipoyl-carrier protein] + a hydroperoxide = N(6)-[(R)-lipoyl]-L-lysyl-[lipoyl-carrier protein] + an alcohol + H2O. Its function is as follows. Antioxidant protein with alkyl hydroperoxidase activity. Required for the reduction of the AhpC active site cysteine residues and for the regeneration of the AhpC enzyme activity. In Corynebacterium kroppenstedtii (strain DSM 44385 / JCM 11950 / CIP 105744 / CCUG 35717), this protein is Alkyl hydroperoxide reductase AhpD.